The following is a 684-amino-acid chain: MMDASKELQVLHIDFLNQDNAVSHHTWEFQTSSPVFRRGQVFHLRLVLNQPLQSYHQLKLEFSTGPNPSIAKHTLVVLDPRTPSDHYNWQATLQNESGKEVTVAVTSSPNAILGKYQLNVKTGNHILKSEENILYLLFNPWCKEDMVFMPDEDERKEYILNDTGCHYVGAARSIKCKPWNFGQFEKNVLDCCISLLTESSLKPTDRRDPVLVCRAMCAMMSFEKGQGVLIGNWTGDYEGGTAPYKWTGSAPILQQYYNTKQAVCFGQCWVFAGILTTVLRALGIPARSVTGFDSAHDTERNLTVDTYVNENGEKITSMTHDSVWNFHVWTDAWMKRPDLPKGYDGWQAVDATPQERSQGVFCCGPSPLTAIRKGDIFIVYDTRFVFSEVNGDRLIWLVKMVNGQEELHVISMETTSIGKNISTKAVGQDRRRDITYEYKYPEGSSEERQVMDHAFLLLSSEREHRRPVKENFLHMSVQSDDVLLGNSVNFTVILKRKTAALQNVNILGSFELQLYTGKKMAKLCDLNKTSQIQGQVSEVTLTLDSKTYINSLAILDDEPVIRGFIIAEIVESKEIMASEVFTSFQYPEFSIELPNTGRIGQLLVCNCIFKNTLAIPLTDVKFSLESLGISSLQTSDHGTVQPGETIQSQIKCTPIKTGPKKFIVKLSSKQVKEINAQKIVLITK.

Residues cysteine 268, histidine 327, and aspartate 350 contribute to the active site. Ca(2+)-binding residues include asparagine 390, aspartate 392, glutamate 442, and glutamate 447.

The protein belongs to the transglutaminase superfamily. Transglutaminase family. In terms of assembly, homodimer. The cofactor is Ca(2+). In terms of tissue distribution, prostate.

The catalysed reaction is L-glutaminyl-[protein] + L-lysyl-[protein] = [protein]-L-lysyl-N(6)-5-L-glutamyl-[protein] + NH4(+). Associated with the mammalian reproductive process. Catalyzes the cross-linking of proteins and the conjugation of polyamines to specific proteins in the seminal tract. In Homo sapiens (Human), this protein is Protein-glutamine gamma-glutamyltransferase 4 (TGM4).